The following is a 187-amino-acid chain: Crossover junction endodeoxyribonuclease RuvC (187 aa).

Catalysis depends on residues aspartate 7, glutamate 67, and aspartate 140. Residues aspartate 7, glutamate 67, and aspartate 140 each contribute to the Mg(2+) site.

The protein belongs to the RuvC family. Homodimer which binds Holliday junction (HJ) DNA. The HJ becomes 2-fold symmetrical on binding to RuvC with unstacked arms; it has a different conformation from HJ DNA in complex with RuvA. In the full resolvosome a probable DNA-RuvA(4)-RuvB(12)-RuvC(2) complex forms which resolves the HJ. It depends on Mg(2+) as a cofactor.

It is found in the cytoplasm. It catalyses the reaction Endonucleolytic cleavage at a junction such as a reciprocal single-stranded crossover between two homologous DNA duplexes (Holliday junction).. In terms of biological role, the RuvA-RuvB-RuvC complex processes Holliday junction (HJ) DNA during genetic recombination and DNA repair. Endonuclease that resolves HJ intermediates. Cleaves cruciform DNA by making single-stranded nicks across the HJ at symmetrical positions within the homologous arms, yielding a 5'-phosphate and a 3'-hydroxyl group; requires a central core of homology in the junction. The consensus cleavage sequence is 5'-(A/T)TT(C/G)-3'. Cleavage occurs on the 3'-side of the TT dinucleotide at the point of strand exchange. HJ branch migration catalyzed by RuvA-RuvB allows RuvC to scan DNA until it finds its consensus sequence, where it cleaves and resolves the cruciform DNA. The chain is Crossover junction endodeoxyribonuclease RuvC from Chlorobaculum parvum (strain DSM 263 / NCIMB 8327) (Chlorobium vibrioforme subsp. thiosulfatophilum).